The chain runs to 77 residues: UPF0401 protein c0279 (77 aa).

This sequence belongs to the UPF0401 family.

The chain is UPF0401 protein c0279 from Escherichia coli O6:H1 (strain CFT073 / ATCC 700928 / UPEC).